The primary structure comprises 416 residues: Histidine--tRNA ligase (416 aa).

Belongs to the class-II aminoacyl-tRNA synthetase family. In terms of assembly, homodimer.

It is found in the cytoplasm. The enzyme catalyses tRNA(His) + L-histidine + ATP = L-histidyl-tRNA(His) + AMP + diphosphate + H(+). The protein is Histidine--tRNA ligase of Clostridium kluyveri (strain NBRC 12016).